The sequence spans 246 residues: Zinc import ATP-binding protein ZnuC (246 aa).

In terms of domain architecture, ABC transporter spans 24-244 (LKIENLALAY…TLGEIFSSYI (221 aa)). 56–63 (GPNGGGKT) serves as a coordination point for ATP.

The protein belongs to the ABC transporter superfamily. Zinc importer (TC 3.A.1.15.5) family. As to quaternary structure, the complex is composed of two ATP-binding proteins (ZnuC), two transmembrane proteins (ZnuB) and a solute-binding protein (ZnuA).

It is found in the cell membrane. It carries out the reaction Zn(2+)(out) + ATP(in) + H2O(in) = Zn(2+)(in) + ADP(in) + phosphate(in) + H(+)(in). Its function is as follows. Part of the ABC transporter complex ZnuABC involved in zinc import. Responsible for energy coupling to the transport system. This Wolbachia sp. subsp. Brugia malayi (strain TRS) protein is Zinc import ATP-binding protein ZnuC.